A 350-amino-acid chain; its full sequence is uncharacterized protein (350 aa).

Functionally, may play a role in septum formation. This is an uncharacterized protein from Mycobacterium tuberculosis (strain CDC 1551 / Oshkosh).